We begin with the raw amino-acid sequence, 438 residues long: MPKLSFSDFNDYDNKLKCYLQNKGIEKEFTECKLHGIMNMVDKFNLYNLKDVEQLSFVMWKLRKYFVKLLHNGYLLTRVNFDMFEKKILEYNSTTRVVRHRGMTPLGGLEVDIDPKIFYLDCIKFIGQFTNQQEIYDKCLNILENSQKKLSDNYLPSRIMYLMRYNEYVNVNHNKVTENIFHMNKLSNFYHNVFTITPSQEEQYERYKFEIMEVYHDIARFKSSRYSGQANRIGYVCLTDIMVKNHYHVIDDTDKISYHTKMFRSTTLDSIISKILCEISDQIILPDEELAARKTARKIEKKMNNDLRFISKNDKVEILDVFSNAFICVKDIKYDVEILKRDMLIQLYERGIVDPNSDITYDLMRNAAENGVLWIVKFLVEKGCPVRNLPPSGNGKKQLHEILTEPVLDDLGFGKKWVAKQTETRINLLNYLIDNHYI.

This is an uncharacterized protein from Acanthamoeba polyphaga mimivirus (APMV).